The sequence spans 318 residues: MIDPTLRGAYRPGQLTVHHDPAVLGSVAKALRGVGRTVALVPTMGALHQGHLQIVRQAKRTNQVVIVSIFVNPLQFGAGEDLDKYPRTLDADVELLRAEGVELVFAPNAEQMYPDGPRTTVHPGPLGAELEGASRPTHFAGMLTVVAKLLQIARPHQAFFGEKDYQQLTLIRQMVRDLNFDVRIVAVPTVRESDGLALSSRNRYLDAAQRETALALSAALSAGAHAGGLGAEGVLAAARAVLDATPGLDLDYLELRSSTLGPAPASGNARLLVAAKVGTTRLIDNIAVTLGAPIDGHPNLDSQPEPAGTDPALLPPAR.

44-51 (MGALHQGH) is an ATP binding site. Catalysis depends on histidine 51, which acts as the Proton donor. Glutamine 75 provides a ligand contact to (R)-pantoate. Glutamine 75 contacts beta-alanine. ATP is bound at residue 161 to 164 (GEKD). Residue glutamine 167 participates in (R)-pantoate binding. ATP contacts are provided by residues valine 190 and 198-201 (LSSR). Residues 295–318 (DGHPNLDSQPEPAGTDPALLPPAR) are disordered.

The protein belongs to the pantothenate synthetase family. As to quaternary structure, homodimer.

It localises to the cytoplasm. It catalyses the reaction (R)-pantoate + beta-alanine + ATP = (R)-pantothenate + AMP + diphosphate + H(+). It functions in the pathway cofactor biosynthesis; (R)-pantothenate biosynthesis; (R)-pantothenate from (R)-pantoate and beta-alanine: step 1/1. Functionally, catalyzes the condensation of pantoate with beta-alanine in an ATP-dependent reaction via a pantoyl-adenylate intermediate. This is Pantothenate synthetase from Nocardia farcinica (strain IFM 10152).